Reading from the N-terminus, the 230-residue chain is Large ribosomal subunit protein uL1 (230 aa).

Belongs to the universal ribosomal protein uL1 family. As to quaternary structure, part of the 50S ribosomal subunit.

Binds directly to 23S rRNA. The L1 stalk is quite mobile in the ribosome, and is involved in E site tRNA release. In terms of biological role, protein L1 is also a translational repressor protein, it controls the translation of the L11 operon by binding to its mRNA. The protein is Large ribosomal subunit protein uL1 of Lactobacillus johnsonii (strain CNCM I-12250 / La1 / NCC 533).